The following is a 561-amino-acid chain: Arginine--tRNA ligase (561 aa).

A 'HIGH' region motif is present at residues 135–145; sequence ANPTGLLHMGN.

Belongs to the class-I aminoacyl-tRNA synthetase family. In terms of assembly, monomer.

The protein resides in the cytoplasm. The enzyme catalyses tRNA(Arg) + L-arginine + ATP = L-arginyl-tRNA(Arg) + AMP + diphosphate. This chain is Arginine--tRNA ligase, found in Desulfitobacterium hafniense (strain DSM 10664 / DCB-2).